The following is a 297-amino-acid chain: Formylmethanofuran--tetrahydromethanopterin formyltransferase (297 aa).

It belongs to the FTR family. In terms of assembly, homotetramer.

Its subcellular location is the cytoplasm. The catalysed reaction is N-formylmethanofuran + 5,6,7,8-tetrahydromethanopterin + H(+) = N(5)-formyl-5,6,7,8-tetrahydromethanopterin + methanofuran. It functions in the pathway one-carbon metabolism; methanogenesis from CO(2); 5,10-methenyl-5,6,7,8-tetrahydromethanopterin from CO(2): step 2/3. Functionally, catalyzes the reversible transfer of a formyl group from formylmethanofuran (formyl-MFR) to tetrahydromethanopterin (H(4)MPT) to produce 5-formyl tetrahydromethanopterin (5-formyl-H(4)MPT) and methanofuran (MFR). This is Formylmethanofuran--tetrahydromethanopterin formyltransferase from Methanothermus fervidus (strain ATCC 43054 / DSM 2088 / JCM 10308 / V24 S).